A 460-amino-acid polypeptide reads, in one-letter code: GTPase Der (460 aa).

2 consecutive EngA-type G domains span residues 2-164 (QSII…HEEF) and 196-368 (IRVG…ENFT). Residues 8–15 (GKPNVGKS), 55–59 (DSGGL), 116–119 (NKVD), 202–209 (GRVNVGKS), 249–253 (DTAGI), and 313–316 (NKWD) contribute to the GTP site. Residues 369 to 453 (QKIQTSKLNT…PLVIASRKKG (85 aa)) form the KH-like domain.

This sequence belongs to the TRAFAC class TrmE-Era-EngA-EngB-Septin-like GTPase superfamily. EngA (Der) GTPase family. Associates with the 50S ribosomal subunit.

In terms of biological role, GTPase that plays an essential role in the late steps of ribosome biogenesis. The sequence is that of GTPase Der from Campylobacter jejuni subsp. jejuni serotype O:23/36 (strain 81-176).